We begin with the raw amino-acid sequence, 86 residues long: MKPDIHPEYRETTVICSCGNTFTTRSTAKSGVIHAEVCSNCHPFYTGKQKILDVGGRVQKFEKRFGQLTGAARVARSTGKPRAGRK.

Residues C16, C18, C38, and C41 each contribute to the Zn(2+) site.

The protein belongs to the bacterial ribosomal protein bL31 family. Type A subfamily. As to quaternary structure, part of the 50S ribosomal subunit. Requires Zn(2+) as cofactor.

Its function is as follows. Binds the 23S rRNA. The protein is Large ribosomal subunit protein bL31 of Acidothermus cellulolyticus (strain ATCC 43068 / DSM 8971 / 11B).